Consider the following 883-residue polypeptide: Alanine--tRNA ligase (883 aa).

Zn(2+)-binding residues include H563, H567, C677, and H681.

It belongs to the class-II aminoacyl-tRNA synthetase family. Zn(2+) is required as a cofactor.

It localises to the cytoplasm. It catalyses the reaction tRNA(Ala) + L-alanine + ATP = L-alanyl-tRNA(Ala) + AMP + diphosphate. Functionally, catalyzes the attachment of alanine to tRNA(Ala) in a two-step reaction: alanine is first activated by ATP to form Ala-AMP and then transferred to the acceptor end of tRNA(Ala). Also edits incorrectly charged Ser-tRNA(Ala) and Gly-tRNA(Ala) via its editing domain. In Cereibacter sphaeroides (strain ATCC 17025 / ATH 2.4.3) (Rhodobacter sphaeroides), this protein is Alanine--tRNA ligase.